The following is a 987-amino-acid chain: Nuclear matrix constituent protein 1b (987 aa).

Positions 1-25 (MASPRSAGGVGGGGGGGGGSGGAAA) are disordered. A compositionally biased stretch (gly residues) spans 8-24 (GGVGGGGGGGGGSGGAA). Coiled-coil stretches lie at residues 403–545 (LAEL…ERRA) and 594–717 (LSKI…DREA). Basic and acidic residues-rich tracts occupy residues 752–764 (SDIN…HDNS) and 898–908 (CKEHEYGDKGP). Disordered stretches follow at residues 752–775 (SDIN…FGRK) and 887–987 (HDEA…FLIT). The span at 944–954 (ATVSATETSNV) shows a compositional bias: polar residues. The segment covering 956–973 (GPEDNNDSDEEDEEEEEE) has biased composition (acidic residues).

This sequence belongs to the CRWN family. In terms of assembly, interacts with SWI3C.

It is found in the nucleus matrix. The protein localises to the nucleus lamina. Functionally, architectural component of nuclear structure that plays different roles in controlling nuclear size and morphology. Involved in the modification of chromatin accessibility by interacting with SWI3C, a component of the chromatin-remodeling complex, to thus reduce the suppression effect of the complex. Acts as positive regulator of drought resistance and modulates root growth. Positively regulates the expression of genes related to root growth and drought resistance. This Oryza sativa subsp. japonica (Rice) protein is Nuclear matrix constituent protein 1b.